The chain runs to 482 residues: Alpha-ketoglutarate semialdehyde dehydrogenase (482 aa).

The tract at residues 1-28 is disordered; it reads MTDPSKNYVNGEWVTSETGETTEVTNPA. Residues 11–25 show a composition bias toward low complexity; the sequence is GEWVTSETGETTEVT. Residue Cys284 is part of the active site.

The protein belongs to the aldehyde dehydrogenase family. As to quaternary structure, homotetramer.

It carries out the reaction 2,5-dioxopentanoate + NADP(+) + H2O = 2-oxoglutarate + NADPH + 2 H(+). The protein operates within carbohydrate metabolism; D-xylose degradation. Alpha-ketoglutarate semialdehyde dehydrogenase involved in the degradation of D-xylose, a major component of hemicelluloses such as xylan. Catalyzes the fifth reaction in the xylose utilization pathway through dehydratation of alpha-ketoglutarate semialdehyde (2,5-dioxopentanoate) into alpha-ketoglutarate. This is Alpha-ketoglutarate semialdehyde dehydrogenase from Haloferax volcanii (strain ATCC 29605 / DSM 3757 / JCM 8879 / NBRC 14742 / NCIMB 2012 / VKM B-1768 / DS2) (Halobacterium volcanii).